A 337-amino-acid chain; its full sequence is Phosphate acyltransferase (337 aa).

Belongs to the PlsX family. Homodimer. Probably interacts with PlsY.

Its subcellular location is the cytoplasm. It catalyses the reaction a fatty acyl-[ACP] + phosphate = an acyl phosphate + holo-[ACP]. It functions in the pathway lipid metabolism; phospholipid metabolism. In terms of biological role, catalyzes the reversible formation of acyl-phosphate (acyl-PO(4)) from acyl-[acyl-carrier-protein] (acyl-ACP). This enzyme utilizes acyl-ACP as fatty acyl donor, but not acyl-CoA. This Latilactobacillus sakei subsp. sakei (strain 23K) (Lactobacillus sakei subsp. sakei) protein is Phosphate acyltransferase.